We begin with the raw amino-acid sequence, 392 residues long: Lipid-A-disaccharide synthase (392 aa).

The protein belongs to the LpxB family.

It carries out the reaction a lipid X + a UDP-2-N,3-O-bis[(3R)-3-hydroxyacyl]-alpha-D-glucosamine = a lipid A disaccharide + UDP + H(+). It participates in bacterial outer membrane biogenesis; LPS lipid A biosynthesis. In terms of biological role, condensation of UDP-2,3-diacylglucosamine and 2,3-diacylglucosamine-1-phosphate to form lipid A disaccharide, a precursor of lipid A, a phosphorylated glycolipid that anchors the lipopolysaccharide to the outer membrane of the cell. In Syntrophotalea carbinolica (strain DSM 2380 / NBRC 103641 / GraBd1) (Pelobacter carbinolicus), this protein is Lipid-A-disaccharide synthase.